A 155-amino-acid chain; its full sequence is MAHEVKGEILGMLGEFKKFIARGNVLDLAVGVIIGGAFGKIVTSLTESVIMPVVGWLTGGVDFTRYFVRLGPVPADFKGDPTSYAELKAAGVPMIGYGDFITQAVNFVIVAFIIFLIVKAVNRMFEKPEEAPAAPSGPTEVELLAEIRDALKAKG.

2 helical membrane passes run 25–45 (VLDLAVGVIIGGAFGKIVTSL) and 98–118 (GDFITQAVNFVIVAFIIFLIV).

It belongs to the MscL family. As to quaternary structure, homopentamer.

Its subcellular location is the cell inner membrane. Its function is as follows. Channel that opens in response to stretch forces in the membrane lipid bilayer. May participate in the regulation of osmotic pressure changes within the cell. The polypeptide is Large-conductance mechanosensitive channel (Novosphingobium aromaticivorans (strain ATCC 700278 / DSM 12444 / CCUG 56034 / CIP 105152 / NBRC 16084 / F199)).